The following is a 951-amino-acid chain: Pentatricopeptide repeat-containing protein At4g19220, mitochondrial (951 aa).

A mitochondrion-targeting transit peptide spans 1 to 63 (MLLVMVRSST…RHFTSSVLSP (63 aa)). PPR repeat units follow at residues 121-151 (DLAT…LKEK), 152-186 (DVIV…GNEF), 187-221 (DSTT…GLVG), 222-252 (DSSL…MEHR), 253-287 (DIVS…GQEA), 288-322 (DTVT…GYSP), 325-355 (HVSV…LVCR), 356-386 (DVIS…MQSV), 392-426 (DIAT…EMQS), 428-458 (ALEV…TTHR), 459-489 (DLVS…VVSE), 496-530 (SLST…GFGD), 531-561 (NMLS…MSET), 563-597 (DLTS…GKIR), 599-629 (DLIT…AIKS), 634-668 (DTQL…NLCS), 669-695 (WNCV…LKLE), 697-731 (NEIT…GFQA), 732-762 (NPFV…SGVN), 763-793 (SISA…LSSN), 799-829 (NKSS…MEEK), and 835-865 (VTEH…IGEP). Residues 870–945 (VWGALLSACN…LPGYSVIDVR (76 aa)) form a type E motif region.

Belongs to the PPR family. PCMP-E subfamily.

The protein localises to the mitochondrion. The chain is Pentatricopeptide repeat-containing protein At4g19220, mitochondrial (PCMP-E2) from Arabidopsis thaliana (Mouse-ear cress).